We begin with the raw amino-acid sequence, 196 residues long: Thymidine kinase (196 aa).

17 to 24 serves as a coordination point for ATP; sequence GPMFAGKT. Glutamate 92 functions as the Proton acceptor in the catalytic mechanism. Phenylalanine 121 contacts substrate. Zn(2+) is bound by residues cysteine 146 and cysteine 149. Residue 166–170 coordinates substrate; that stretch reads LILAG. Residues cysteine 179 and cysteine 182 each contribute to the Zn(2+) site.

This sequence belongs to the thymidine kinase family.

The enzyme catalyses thymidine + ATP = dTMP + ADP + H(+). Functionally, phosphorylates thymidine. ASFV replicates in the cytoplasm of infected cells and contains genes encoding a number of enzymes needed for DNA synthesis, including thymidine kinase. Important for growth in swine macrophages in vitro and is a virus virulence factor in swine. This chain is Thymidine kinase, found in African swine fever virus (strain Badajoz 1971 Vero-adapted) (Ba71V).